Reading from the N-terminus, the 124-residue chain is Fluoride-specific ion channel FluC (124 aa).

4 helical membrane passes run 5–25 (LVVF…NLAA), 36–56 (TMII…WFAV), 70–90 (TGIL…FLLM), and 100–120 (LYVL…LAVI). Residues G74 and T77 each contribute to the Na(+) site.

Belongs to the fluoride channel Fluc/FEX (TC 1.A.43) family.

It is found in the cell inner membrane. The catalysed reaction is fluoride(in) = fluoride(out). Its activity is regulated as follows. Na(+) is not transported, but it plays an essential structural role and its presence is essential for fluoride channel function. Functionally, fluoride-specific ion channel. Important for reducing fluoride concentration in the cell, thus reducing its toxicity. This chain is Fluoride-specific ion channel FluC, found in Methylobacterium nodulans (strain LMG 21967 / CNCM I-2342 / ORS 2060).